Here is a 312-residue protein sequence, read N- to C-terminus: Deoxycytidylate deaminase (312 aa).

In terms of domain architecture, CMP/dCMP-type deaminase spans 162–291; sequence SWDSYFMKLA…RMDEESFKVL (130 aa). Histidine 233 is a binding site for Zn(2+). Residue glutamate 235 is the Proton donor of the active site. Residues cysteine 260 and cysteine 263 each contribute to the Zn(2+) site.

It belongs to the cytidine and deoxycytidylate deaminase family. Zn(2+) serves as cofactor.

It catalyses the reaction dCMP + H2O + H(+) = dUMP + NH4(+). Allosteric enzyme whose activity is greatly influenced by the end products of its metabolic pathway, dCTP and dTTP. Catalyzes the hydrolytic deamination of dCMP to yield dUMP, the nucleotide substrate for thymidylate synthetase. This chain is Deoxycytidylate deaminase, found in Saccharomyces cerevisiae (strain ATCC 204508 / S288c) (Baker's yeast).